We begin with the raw amino-acid sequence, 61 residues long: Protein YncO (61 aa).

Residues 18–38 (HVFLYVFYIFLFLVLFIMTIY) form a helical membrane-spanning segment.

The protein localises to the cell inner membrane. This chain is Protein YncO, found in Escherichia coli (strain K12).